The sequence spans 405 residues: Octaketide synthase 3 (405 aa).

The span at Met-1–Leu-10 shows a compositional bias: polar residues. The disordered stretch occupies residues Met-1–Ala-22. Residue Cys-176 is part of the active site. Residues Ser-283 and Gly-320 to Ala-323 contribute to the CoA site.

The protein belongs to the thiolase-like superfamily. Chalcone/stilbene synthases family. In terms of assembly, homodimer.

It functions in the pathway secondary metabolite biosynthesis; flavonoid biosynthesis. Catalyzes the iterative condensations of 8 molecules of malonyl-CoA to produce aromatic octaketides, SEK4 and SEK4b, the products of the minimal polyketide synthase for the benzoisochromanequinone actinorhodin. May be involved in the biosynthesis of the octaketide barbaloin. This is Octaketide synthase 3 (PKS5) from Aloe arborescens (Kidachi aloe).